The sequence spans 172 residues: Biogenesis of lysosome-related organelles complex 1 subunit 6 (172 aa).

2 disordered regions span residues Met1 to Glu36 and Arg135 to Met172. Residues Asp63–Arg167 are a coiled coil. A compositionally biased stretch (basic and acidic residues) spans Arg143 to Leu164.

It belongs to the BLOC1S6 family. In terms of assembly, interacts with BLOC1S4 and DTNBP1/BLOC1S7. Homodimer. Component of the biogenesis of lysosome-related organelles complex 1 (BLOC-1) composed of BLOC1S1, BLOC1S2, BLOC1S3, BLOC1S4, BLOC1S5, BLOC1S6, DTNBP1/BLOC1S7 and SNAPIN/BLOC1S8. Octamer composed of one copy each BLOC1S1, BLOC1S2, BLOC1S3, BLOC1S4, BLOC1S5, BLOC1S6, DTNBP1/BLOC1S7 and SNAPIN/BLOC1S8. The BLOC-1 complex associates with the AP-3 protein complex and membrane protein cargos. Interacts with BLOC1S5, F-actin, SNAP25 isoform 1 and isoform 2, SNAP47 and STX12. Phosphorylated. As to expression, widely expressed.

Its subcellular location is the cytoplasm. The protein resides in the membrane. Functionally, component of the BLOC-1 complex, a complex that is required for normal biogenesis of lysosome-related organelles (LRO), such as platelet dense granules and melanosomes. In concert with the AP-3 complex, the BLOC-1 complex is required to target membrane protein cargos into vesicles assembled at cell bodies for delivery into neurites and nerve terminals. The BLOC-1 complex, in association with SNARE proteins, is also proposed to be involved in neurite extension. May play a role in intracellular vesicle trafficking, particularly in the vesicle-docking and fusion process. In Homo sapiens (Human), this protein is Biogenesis of lysosome-related organelles complex 1 subunit 6 (BLOC1S6).